The chain runs to 443 residues: Chromosomal replication initiator protein DnaA (443 aa).

The tract at residues Met-1–Lys-73 is domain I, interacts with DnaA modulators. A domain II region spans residues Lys-73 to Ser-106. A domain III, AAA+ region region spans residues Thr-107 to Ser-323. 4 residues coordinate ATP: Gly-151, Gly-153, Lys-154, and Thr-155. Residues Asn-324 to Tyr-443 are domain IV, binds dsDNA.

It belongs to the DnaA family. In terms of assembly, oligomerizes as a right-handed, spiral filament on DNA at oriC.

The protein resides in the cytoplasm. Functionally, plays an essential role in the initiation and regulation of chromosomal replication. ATP-DnaA binds to the origin of replication (oriC) to initiate formation of the DNA replication initiation complex once per cell cycle. Binds the DnaA box (a 9 base pair repeat at the origin) and separates the double-stranded (ds)DNA. Forms a right-handed helical filament on oriC DNA; dsDNA binds to the exterior of the filament while single-stranded (ss)DNA is stabiized in the filament's interior. The ATP-DnaA-oriC complex binds and stabilizes one strand of the AT-rich DNA unwinding element (DUE), permitting loading of DNA polymerase. After initiation quickly degrades to an ADP-DnaA complex that is not apt for DNA replication. Binds acidic phospholipids. This Thermoanaerobacter pseudethanolicus (strain ATCC 33223 / 39E) (Clostridium thermohydrosulfuricum) protein is Chromosomal replication initiator protein DnaA.